Consider the following 292-residue polypeptide: ATP synthase gamma chain (292 aa).

The protein belongs to the ATPase gamma chain family. In terms of assembly, F-type ATPases have 2 components, CF(1) - the catalytic core - and CF(0) - the membrane proton channel. CF(1) has five subunits: alpha(3), beta(3), gamma(1), delta(1), epsilon(1). CF(0) has three main subunits: a, b and c.

The protein resides in the cell inner membrane. In terms of biological role, produces ATP from ADP in the presence of a proton gradient across the membrane. The gamma chain is believed to be important in regulating ATPase activity and the flow of protons through the CF(0) complex. The polypeptide is ATP synthase gamma chain (Brucella ovis (strain ATCC 25840 / 63/290 / NCTC 10512)).